The following is a 224-amino-acid chain: Charged multivesicular body protein 4b (224 aa).

Residues 1–23 (MSVFGKLFGAGGGKAGKGGPTPQ) form a disordered region. N-acetylserine is present on Ser-2. An intramolecular interaction with C-terminus region spans residues 2–153 (SVFGKLFGAG…EISTAISKPV (152 aa)). N6-acetyllysine is present on Lys-6. Gly residues predominate over residues 8-19 (FGAGGGKAGKGG). A coiled-coil region spans residues 23-183 (QEAIQRLRDT…EELDKNLLEI (161 aa)). At Lys-114 the chain carries N6-acetyllysine. The intramolecular interaction with N-terminus stretch occupies residues 154 to 224 (GFGEEFDEDE…KELENWAGSM (71 aa)). Residues Ser-184 and Ser-223 each carry the phosphoserine modification. Residues 185–224 (GPETVPLPNVPSVALPSKPAKKKEEEDDDMKELENWAGSM) are disordered.

This sequence belongs to the SNF7 family. In terms of assembly, probable core component of the endosomal sorting required for transport complex III (ESCRT-III). ESCRT-III components are thought to multimerize to form a flat lattice on the perimeter membrane of the endosome. Several assembly forms of ESCRT-III may exist that interact and act sequentially. Interacts with CHMP6 and CHMP4C. Interacts with PDCD6IP; the interaction is direct. Interacts with VPS4A; the interaction is direct. Interacts with VPS4B; the interaction is direct. Interacts with CHMP7. Interacts with CFTR; the interaction requires misfolded CFTR. Interacts with PTPN23. Interacts with CC2D1B. ISGylated. Isgylation weakens its interaction with VPS4A.

It is found in the cytoplasm. The protein resides in the cytosol. The protein localises to the late endosome membrane. Its subcellular location is the midbody. It localises to the nucleus envelope. Its function is as follows. Probable core component of the endosomal sorting required for transport complex III (ESCRT-III) which is involved in multivesicular bodies (MVBs) formation and sorting of endosomal cargo proteins into MVBs. MVBs contain intraluminal vesicles (ILVs) that are generated by invagination and scission from the limiting membrane of the endosome and mostly are delivered to lysosomes enabling degradation of membrane proteins, such as stimulated growth factor receptors, lysosomal enzymes and lipids. The MVB pathway appears to require the sequential function of ESCRT-O, -I,-II and -III complexes. ESCRT-III proteins mostly dissociate from the invaginating membrane before the ILV is released. The ESCRT machinery also functions in topologically equivalent membrane fission events, such as the terminal stages of cytokinesis. Together with SPAST, the ESCRT-III complex promotes nuclear envelope sealing and mitotic spindle disassembly during late anaphase. Plays a role in the endosomal sorting pathway. ESCRT-III proteins are believed to mediate the necessary vesicle extrusion and/or membrane fission activities, possibly in conjunction with the AAA ATPase VPS4. When overexpressed, membrane-assembled circular arrays of CHMP4B filaments can promote or stabilize negative curvature and outward budding. CHMP4A/B/C are required for the exosomal release of SDCBP, CD63 and syndecan. Majority of the protein exists in a folded closed conformation. This is Charged multivesicular body protein 4b (Chmp4b) from Mus musculus (Mouse).